The primary structure comprises 249 residues: Methyl-coenzyme M reductase I subunit gamma (249 aa).

R120 lines the coenzyme M pocket.

Belongs to the methyl-coenzyme M reductase gamma subunit family. In terms of assembly, MCR is a hexamer of two alpha, two beta, and two gamma chains, forming a dimer of heterotrimers. The cofactor is coenzyme F430.

The protein localises to the cytoplasm. It catalyses the reaction coenzyme B + methyl-coenzyme M = methane + coenzyme M-coenzyme B heterodisulfide. It functions in the pathway one-carbon metabolism; methyl-coenzyme M reduction; methane from methyl-coenzyme M: step 1/1. In terms of biological role, component of the methyl-coenzyme M reductase (MCR) I that catalyzes the reductive cleavage of methyl-coenzyme M (CoM-S-CH3 or 2-(methylthio)ethanesulfonate) using coenzyme B (CoB or 7-mercaptoheptanoylthreonine phosphate) as reductant which results in the production of methane and the mixed heterodisulfide of CoB and CoM (CoM-S-S-CoB). This is the final step in methanogenesis. The protein is Methyl-coenzyme M reductase I subunit gamma (mcrG) of Methanothermobacter thermautotrophicus (strain ATCC 29096 / DSM 1053 / JCM 10044 / NBRC 100330 / Delta H) (Methanobacterium thermoautotrophicum).